A 250-amino-acid chain; its full sequence is UPF0736 protein BLi01230/BL03322 (250 aa).

Belongs to the UPF0736 family.

This Bacillus licheniformis (strain ATCC 14580 / DSM 13 / JCM 2505 / CCUG 7422 / NBRC 12200 / NCIMB 9375 / NCTC 10341 / NRRL NRS-1264 / Gibson 46) protein is UPF0736 protein BLi01230/BL03322.